The following is a 585-amino-acid chain: Pyruvate kinase (585 aa).

A substrate-binding site is contributed by R32. K(+) is bound by residues N34, S36, D66, and T67. ATP is bound at residue N34–H37. ATP is bound by residues R73 and K156. Residue E222 participates in Mg(2+) binding. Positions 245, 246, and 278 each coordinate substrate. Mg(2+) is bound at residue D246.

Belongs to the pyruvate kinase family. It in the C-terminal section; belongs to the PEP-utilizing enzyme family. In terms of assembly, homotetramer. It depends on Mg(2+) as a cofactor. The cofactor is K(+).

It catalyses the reaction pyruvate + ATP = phosphoenolpyruvate + ADP + H(+). It participates in carbohydrate degradation; glycolysis; pyruvate from D-glyceraldehyde 3-phosphate: step 5/5. This is Pyruvate kinase (pyk) from Bacillus licheniformis.